Reading from the N-terminus, the 636-residue chain is Ketocytochalasin monooxygenase (636 aa).

Residues D125, 133–136 (TWYW), D145, Y151, and I195 contribute to the FAD site. 143–145 (ACD) contacts NADP(+). NADP(+)-binding positions include 279–285 (TGASAVQ), 302–303 (RT), and 420–421 (KR). W534 contributes to the FAD binding site.

The protein belongs to the FAD-binding monooxygenase family. Requires FAD as cofactor.

The catalysed reaction is ketocytochalasin + NADPH + O2 + H(+) = iso-precytochalasin + NADP(+) + H2O. The enzyme catalyses iso-precytochalasin + NADPH + O2 + H(+) = cytochalasin Z16 + NADP(+) + H2O. It participates in mycotoxin biosynthesis. In terms of biological role, ketocytochalasin monooxygenase; part of the gene cluster that mediates the biosynthesis of a family of the mycotoxins cytochalasins E and K. The hybrid PKS-NRPS synthetase ccsA and the enoyl reductase ccsC are responsible for fusion of phenylalanine with an octaketide backbone and subsequent release of the stable tetramic acid precursor. The polyketide synthase module (PKS) of the PKS-NRPS ccsA is responsible for the synthesis of the octaketide backbone. The downstream nonribosomal peptide synthetase (NRPS) amidates the carboxyl end of the octaketide with a phenylalanine. A reductase-like domain (R) at the C-terminus catalyzes the reductive release of the polyketide-amino acid intermediate. Because ccsA lacks a designated enoylreductase (ER) domain, the required activity is provided the enoyl reductase ccsC. Upon formation of the 11-membered carbocycle-fused perhydroisoindolone intermediate, a number of oxidative steps are required to afford the final cytochalasin E and K, including two hydroxylations at C17 and C18, one alcohol oxidation at C17, one epoxidation at C6 and C7 and two Baeyer-Villiger oxidations. The oxidative modification at C17, C18 and the C6-C7 epoxidation are likely to be catalyzed by the two cytochrome P450 oxygenases ccsD and ccsG. CcsD may be responsible for the epoxidation of the C6-C7 double bond. CcsG may be responsible for the successive oxidative modifications at C17 and C18. The double Baeyer-Villiger oxidations of ketocytochalasin to precytochalasin and cytochalasin Z(16) are among the final steps leading to cytochalasin E and K and are catalyzed by ccsB. The first oxygen insertion step follows that of the classic BVMO mechanism, generating the ester precytochalasin. Release of precytochalasin into an aqueous environment can generate the shunt product iso-precytochalasin through spontaneous isomerization. Alternatively, precytochalasin can undergo further oxidation by ccsB to yield the in-line carbonate-containing cytochalasin Z(16). Cytochalasin Z(16) is a precursor to cytochalasin E and cytochalasin K, whereas iso-precytochalasin is a precursor to cytochalasin Z(17) and rosellichalasin. The hydrolyase ccsE may catalyze hydrolysis of epoxide bond in cytochalasin E to afford cytochalasin K. The function of ccsF has not been assigned but it may play a role in post-PKS-NRPS biosynthetic step, resistance or transport of cytochalasins and related PKS-NRPS products. The polypeptide is Ketocytochalasin monooxygenase (Aspergillus clavatus (strain ATCC 1007 / CBS 513.65 / DSM 816 / NCTC 3887 / NRRL 1 / QM 1276 / 107)).